A 1149-amino-acid chain; its full sequence is MGNENSTSDHQRTSSVQSPRSLQPPGKSQSLQKQQGDLPGSCAGSIPGTDDVIQPAAPVDPGHPPLAGIGSNQGEVCTSLQLSYTIVTVQSASPSAARASPAPLAPEHTASAPSAAGPGVEVTPTGSPQHLAKNEPRSSDSEEAFETPESTTPVKAPPAPPPPPPEVTPEPEVIDPPAPEEPGCISEPPVVVPDGPRSSESVEGSPFRPSHSSSAVFDEDKPIASSGTYNLDFDSIELVDNFQSLEPCSADSKGQECKVSTRRKSTESVPPSKSTLSRSLSLQASDFDGASCPGSPEAGTLTTDACGTGSNSASSTLKRTKKTRPPSLKKKQATKKPTETPPVKETQQEPGEESPVPSEEHLAPETKTESATPEGAGCTLSDDTPLESPAVPTATCPLTLESAEDVSPLVSGGGRVQNSPPVGRKSVPLTTASEAVEVTLSDSGGQEDLPAKGLSVRLEFDYSEDKGSWESQQENAPPTKKIGKKPVAKMPLRRPKMKKTPEKLDNTPASPPRSPTEPSDTPIAKGTYTFDIDKWDDPNFNPFSSTSKMQESPKLSQQSYNFDPDACEESLDPFKASSKTPSSPSKSPASFEIPASTTEADGDGLNKPAKKKKTPLKTMVEDVMSVCSLFDTFRVKKSPKRSPLSDPPSQDPTPAATPEAPSAISTVVHATDEEKLAVTSQKWTCMTVDLDADKQDFPQPSDLSNFVNETKFNSPSEELDYRNSYEIEYMEKLGSSLPQDDDTPKKQALYLMFDTPQESPVKSPPVRMSDSPTPCSGSSFEDTEALVNAATKLQHPVARGLPSSQEPLLQVPEKPSQKELEAMALGTPAEAIEITAPEGAFASADTLLSRLAHPASLCGALGYLEPDLAEKNPPVFAQKLQEELEFAVMRIEALKLARQIALASRSRQDTKREAAHPPDVSISKTALYSRIGSTEVEKPPGLLFQQPDLDSALQVARAEVIAKEREVSEWRDKYEESRREVVEMRKIVAEYEKTIAQMIPGTERKILSHQTVQQLVLEKEQALADLNSVEKSLADLFRRYEKMKEVLEGFRKNEEVLKKCAQEYLSRVKKEEQRYQALKVHAEEKLDRANAEIAQVRGKAQQEQAAYQASLRKEQLRVDALERTLEQKNKEIEELTKICDELIAKMGKS.

Disordered stretches follow at residues 1 to 73 (MGNE…GSNQ), 91 to 227 (SASP…ASSG), and 247 to 430 (PCSA…VPLT). Over residues 13-35 (TSSVQSPRSLQPPGKSQSLQKQQ) the composition is skewed to polar residues. Positions 91–106 (SASPSAARASPAPLAP) are enriched in low complexity. Phosphoserine is present on S100. Residues 155–180 (KAPPAPPPPPPEVTPEPEVIDPPAPE) show a composition bias toward pro residues. Phosphoserine is present on S265. Composition is skewed to polar residues over residues 267–284 (ESVP…SLQA) and 300–317 (TLTT…SSTL). Residues 318–334 (KRTKKTRPPSLKKKQAT) show a composition bias toward basic residues. S354 is subject to Phosphoserine. A compositionally biased stretch (basic and acidic residues) spans 358-368 (SEEHLAPETKT). S419 carries the post-translational modification Phosphoserine. Position 439 is a phosphothreonine (T439). The tract at residues 463-617 (SEDKGSWESQ…PAKKKKTPLK (155 aa)) is disordered. A compositionally biased stretch (basic residues) spans 481 to 498 (KIGKKPVAKMPLRRPKMK). Residues 508-596 (PASPPRSPTE…SPASFEIPAS (89 aa)) form the SPAZ domain. Phosphoserine is present on residues S510 and S514. Position 516 is a phosphothreonine (T516). Residues 541-561 (NPFSSTSKMQESPKLSQQSYN) are compositionally biased toward polar residues. Phosphoserine occurs at positions 552, 582, 585, 587, and 596. Residues 575–590 (KASSKTPSSPSKSPAS) show a composition bias toward low complexity. T632, T653, and T657 each carry phosphothreonine. Disordered stretches follow at residues 636 to 665 (KKSP…SAIS) and 696 to 719 (DFPQ…SEEL). A compositionally biased stretch (low complexity) spans 652 to 665 (PTPAATPEAPSAIS). Residues 701–716 (SDLSNFVNETKFNSPS) show a composition bias toward polar residues. Phosphoserine occurs at positions 714 and 736. T755 carries the phosphothreonine modification. The segment at 756–780 (PQESPVKSPPVRMSDSPTPCSGSSF) is disordered. S759 and S771 each carry phosphoserine. Over residues 770–780 (DSPTPCSGSSF) the composition is skewed to polar residues. Coiled coils occupy residues 877–905 (AQKL…LASR) and 948–1148 (DLDS…KMGK).

This sequence belongs to the TACC family. Interacts with microtubules. Interacts with YEATS4, GCN5L2 and PCAF. Interacts with CCDC100/CEP120. Phosphorylated; which is required for localization in centrosome. As to expression, expressed in brain, kidney, lung, thymus and ovary. Not detectable in normal tissues at protein level.

Its subcellular location is the cytoplasm. The protein resides in the nucleus. It is found in the cytoskeleton. The protein localises to the microtubule organizing center. It localises to the centrosome. In terms of biological role, plays a role in the microtubule-dependent coupling of the nucleus and the centrosome. Involved in the processes that regulate centrosome-mediated interkinetic nuclear migration (INM) of neural progenitors. May play a role in organizing centrosomal microtubules. In Mus musculus (Mouse), this protein is Transforming acidic coiled-coil-containing protein 2 (Tacc2).